The primary structure comprises 321 residues: Dolichyl N-acetyl-alpha-D-glucosaminyl phosphate 3-beta-D-2,3-diacetamido-2,3-dideoxy-beta-D-glucuronosyltransferase (321 aa).

A run of 2 helical transmembrane segments spans residues 252–272 and 290–310; these read FGFL…FIYI and LYIA…YGFF.

The protein belongs to the glycosyltransferase 2 family.

Its subcellular location is the cell membrane. The catalysed reaction is an archaeal dolichyl N-acetyl-alpha-D-glucosaminyl phosphate + UDP-2,3-diacetamido-2,3-dideoxy-alpha-D-glucuronate = an archaeal dolichyl 3-O-(2,3-diacetamido-2,3-dideoxy- beta-D-glucuronosyl)-N-acetyl- alpha-D-glucosaminyl phosphate + UDP + H(+). The protein operates within cell surface structure biogenesis; S-layer biogenesis. It functions in the pathway protein modification; protein glycosylation. Functionally, involved in the assembly of an N-linked disaccharide that decorates the S-layer glycoprotein and flagellins. AglC catalyzes the transfer of 2,3-diacetamido-2,3-dideoxy-alpha-D-glucuronic acid (Glc-2,3-diNAcA) from uridine 5'-diphospho 2,3-diacetamido-2,3-dideoxy-alpha-D-glucuronic acid (UDP-Glc-2,3-diNAcA) to the AglK product Dol-P-GlcNAc to yield Dol-P-GlcNAc-Glc-2,3-diNAcA. AglC is specific for the monophosphate-linked Dol-P-GlcNAc. This chain is Dolichyl N-acetyl-alpha-D-glucosaminyl phosphate 3-beta-D-2,3-diacetamido-2,3-dideoxy-beta-D-glucuronosyltransferase, found in Methanococcus voltae.